We begin with the raw amino-acid sequence, 242 residues long: 3-dehydroquinate dehydratase (242 aa).

3-dehydroquinate is bound by residues 39 to 41 (EIR) and Arg-73. His-135 serves as the catalytic Proton donor/acceptor. Lys-162 acts as the Schiff-base intermediate with substrate in catalysis. Arg-203 and Gln-228 together coordinate 3-dehydroquinate.

Belongs to the type-I 3-dehydroquinase family. In terms of assembly, homodimer.

The enzyme catalyses 3-dehydroquinate = 3-dehydroshikimate + H2O. It functions in the pathway metabolic intermediate biosynthesis; chorismate biosynthesis; chorismate from D-erythrose 4-phosphate and phosphoenolpyruvate: step 3/7. Involved in the third step of the chorismate pathway, which leads to the biosynthesis of aromatic amino acids. Catalyzes the cis-dehydration of 3-dehydroquinate (DHQ) and introduces the first double bond of the aromatic ring to yield 3-dehydroshikimate. This Methanosarcina barkeri (strain Fusaro / DSM 804) protein is 3-dehydroquinate dehydratase.